The chain runs to 769 residues: Disintegrin and metalloproteinase domain-containing protein 11 (769 aa).

An N-terminal signal peptide occupies residues 1-23 (MRLLRRWAFAALLLSLLPTPGLG). The propeptide occupies 24–225 (TQGPAGALRW…PNRPRLRRKR (202 aa)). The segment at 40–78 (GGPGAPEVTEPSRLVRESSGGEVRKQQLDTRVRQEPPGG) is disordered. The segment covering 61–73 (EVRKQQLDTRVRQ) has biased composition (basic and acidic residues). Asn-96 and Asn-163 each carry an N-linked (GlcNAc...) asparagine glycan. Topologically, residues 226–734 (QVRRGHPTVH…ERYKGPSGTN (509 aa)) are extracellular. In terms of domain architecture, Peptidase M12B spans 239–438 (KYVELIVIND…GGGSCLFNKP (200 aa)). The interval 332 to 769 (GRTFQSTSSG…NIRRGRSGGA (438 aa)) is required for localization to cerebellar cortex basket cell terminals. Also required for localization of KCNA1, KCNA2, DLG4 and ADAM22 to cerebellar cortex basket cell terminal perisomatic axons and pinceaux. Disulfide bonds link Cys-349–Cys-433, Cys-392–Cys-417, Cys-394–Cys-401, and Cys-503–Cys-523. A Disintegrin domain is found at 444-531 (PPECGNGFVE…QCPPNLHKLD (88 aa)). 2 N-linked (GlcNAc...) asparagine glycosylation sites follow: Asn-605 and Asn-673. Disulfide bonds link Cys-677-Cys-692, Cys-686-Cys-698, and Cys-700-Cys-709. An EGF-like domain is found at 677-709 (CPGSGERRICSHHGVCSNEGKCICQPDWTGKDC). The chain crosses the membrane as a helical span at residues 735 to 755 (IIIGSIAGAVLVAAIVLGGTG). Residues 756 to 769 (WGFKNIRRGRSGGA) are Cytoplasmic-facing.

As to quaternary structure, interacts with LGI1 and LGI4. Interacts with KCNA1/KV1.1, KCNA2/KV1.2, DLG4/PSD-95 and ADAM22. Post-translationally, the precursor is cleaved by a furin endopeptidase. Expressed predominantly in brain. Slightly detected or not at all in other tissues.

It is found in the presynaptic cell membrane. It localises to the perikaryon. The protein resides in the cell projection. Its subcellular location is the axon. Functionally, probable ligand for integrin in the brain. This is a non catalytic metalloprotease-like protein. Required for localization of the potassium channel subunit proteins KCNA1/KV1.1 and KCNA2/KV1.2 at cerebellar cortex basket cell distal terminals, is thereby involved in ephaptic inhibitory synchronization of Purkinje cell firing and response to stress. Plays a role in spatial learning and motor coordination. Involved in the nociceptive pain response to chemical-derived stimulation. The sequence is that of Disintegrin and metalloproteinase domain-containing protein 11 (ADAM11) from Homo sapiens (Human).